Reading from the N-terminus, the 162-residue chain is MVTKKEFLEELTNATNEAIKAADKNGDNQLSKKEVNDMYKKCKYPNPTLATNSLFELFDLDKDGKLSVNEVKTAVLVDYIIEAETCLKKFVDIIFKADSNKDNKITWDEARQYFITSGSNEAQAKVLANSMFEDVDSDDDKCITREELREYAIEYFEIYPTE.

EF-hand domains lie at 10–45, 46–81, 85–120, and 123–158; these read ELTNATNEAIKAADKNGDNQLSKKEVNDMYKKCKYP, NPTLATNSLFELFDLDKDGKLSVNEVKTAVLVDYII, TCLKKFVDIIFKADSNKDNKITWDEARQYFITSGSN, and QAKVLANSMFEDVDSDDDKCITREELREYAIEYFEI. Ca(2+) is bound by residues aspartate 23, asparagine 25, aspartate 27, glutamine 29, glutamate 34, aspartate 59, aspartate 61, aspartate 63, lysine 65, and glutamate 70. Ca(2+)-binding residues include aspartate 136, aspartate 138, aspartate 140, cysteine 142, and glutamate 147.

The chain is Calcium-binding protein 4b (cbpD2) from Dictyostelium discoideum (Social amoeba).